The chain runs to 219 residues: Ropporin-1-like protein (219 aa).

Residues 17–54 enclose the RIIa domain; the sequence is PELPDILKQFTKAAIRTQPHDLLQWSAAYFDSLSKGEP.

It belongs to the ropporin family. Component of axonemal radial spoke complexes.

The protein resides in the cell projection. It localises to the cilium. Its subcellular location is the flagellum. Its function is as follows. Functions as part of axonemal radial spoke complexes that play an important part in the motility of sperm and cilia. Important for male fertility. Involved in fibrous sheath integrity and sperm motility, plays a role in PKA-dependent signaling processes required for spermatozoa capacitation. In Xenopus laevis (African clawed frog), this protein is Ropporin-1-like protein (ropn1l).